Reading from the N-terminus, the 206-residue chain is Cytidylate kinase (206 aa).

9–17 (GPAAAGKGT) is a binding site for ATP. A compositionally biased stretch (basic and acidic residues) spans 155–168 (LRERDRRDREREAA). Residues 155 to 174 (LRERDRRDREREAAPLRPAP) are disordered.

The protein belongs to the cytidylate kinase family. Type 1 subfamily.

It is found in the cytoplasm. It carries out the reaction CMP + ATP = CDP + ADP. The enzyme catalyses dCMP + ATP = dCDP + ADP. The polypeptide is Cytidylate kinase (Cereibacter sphaeroides (strain KD131 / KCTC 12085) (Rhodobacter sphaeroides)).